A 359-amino-acid polypeptide reads, in one-letter code: MNIYDQLQAVEDRYEELGELLSDPDVVSDTKRFMELSREEANTRETVTAYREYKQVIQTISDAEEMIKDASGDPELEEMAKEELKESKAAKEEYEEKLKILLLPKDPNDDKNIILEIRGAAGGDEAALFAGDLLTMYQKYAETQGWRFEVMESSVNGVGGIKEVVAMVSGQSVYSKLKYESGAHRVQRVPVTESQGRVHTSTATVLVMPEVEEVEYDIDPKDLRVDIYHASGAGGQNVNKVATAVRMVHIPTGIKVEMQEERTQQKNRDKAMKIIRARVADHFAQIAQDEQDAERKSTVGTGDRSERIRTYNFPQNRVTDHRIGLTLQKLDTILSGKMDEVIDALVMYDQTKKLESLNN.

Glutamine 236 bears the N5-methylglutamine mark.

The protein belongs to the prokaryotic/mitochondrial release factor family. Post-translationally, methylated by PrmC. Methylation increases the termination efficiency of RF1.

It localises to the cytoplasm. Functionally, peptide chain release factor 1 directs the termination of translation in response to the peptide chain termination codons UAG and UAA. This chain is Peptide chain release factor 1, found in Streptococcus pyogenes serotype M1.